A 343-amino-acid polypeptide reads, in one-letter code: Programmed cell death protein 2 (343 aa).

Zn(2+)-binding residues include C134, C137, C145, C148, C154, H158, H167, and C171. The MYND-type; atypical zinc finger occupies 134 to 171 (CRVCGCLAPMTCSRCKQAHYCSKEHQTLDWRLGHKQAC).

In terms of processing, ubiquitinated by PRKN, promoting proteasomal degradation.

It is found in the nucleus. Its function is as follows. May be a DNA-binding protein with a regulatory function. May play an important role in cell death and/or in regulation of cell proliferation. The polypeptide is Programmed cell death protein 2 (Pdcd2) (Mus musculus (Mouse)).